The following is a 256-amino-acid chain: tRNA (guanine-N(1)-)-methyltransferase (256 aa).

S-adenosyl-L-methionine-binding positions include Gly-113 and 132 to 137 (VGDYVL).

Belongs to the RNA methyltransferase TrmD family. In terms of assembly, homodimer.

The protein resides in the cytoplasm. It carries out the reaction guanosine(37) in tRNA + S-adenosyl-L-methionine = N(1)-methylguanosine(37) in tRNA + S-adenosyl-L-homocysteine + H(+). Functionally, specifically methylates guanosine-37 in various tRNAs. The protein is tRNA (guanine-N(1)-)-methyltransferase of Coprothermobacter proteolyticus (strain ATCC 35245 / DSM 5265 / OCM 4 / BT).